A 192-amino-acid polypeptide reads, in one-letter code: Fe/S biogenesis protein NfuA (192 aa).

[4Fe-4S] cluster-binding residues include Cys-149 and Cys-152.

The protein belongs to the NfuA family. Homodimer. [4Fe-4S] cluster is required as a cofactor.

In terms of biological role, involved in iron-sulfur cluster biogenesis. Binds a 4Fe-4S cluster, can transfer this cluster to apoproteins, and thereby intervenes in the maturation of Fe/S proteins. Could also act as a scaffold/chaperone for damaged Fe/S proteins. This Shewanella putrefaciens (strain CN-32 / ATCC BAA-453) protein is Fe/S biogenesis protein NfuA.